The chain runs to 332 residues: Glycerol-3-phosphate dehydrogenase [NAD(P)+] (332 aa).

NADPH is bound by residues Trp-11, Arg-30, and Lys-108. Sn-glycerol 3-phosphate is bound by residues Lys-108, Gly-137, and Ser-139. Ala-141 contacts NADPH. 5 residues coordinate sn-glycerol 3-phosphate: Lys-192, Asp-245, Ser-255, Arg-256, and Asn-257. Lys-192 functions as the Proton acceptor in the catalytic mechanism. Arg-256 is a binding site for NADPH. The NADPH site is built by Val-280 and Glu-282.

Belongs to the NAD-dependent glycerol-3-phosphate dehydrogenase family.

It localises to the cytoplasm. It catalyses the reaction sn-glycerol 3-phosphate + NAD(+) = dihydroxyacetone phosphate + NADH + H(+). It carries out the reaction sn-glycerol 3-phosphate + NADP(+) = dihydroxyacetone phosphate + NADPH + H(+). Its pathway is membrane lipid metabolism; glycerophospholipid metabolism. Functionally, catalyzes the reduction of the glycolytic intermediate dihydroxyacetone phosphate (DHAP) to sn-glycerol 3-phosphate (G3P), the key precursor for phospholipid synthesis. This is Glycerol-3-phosphate dehydrogenase [NAD(P)+] from Burkholderia orbicola (strain MC0-3).